The primary structure comprises 230 residues: MDQAKQDELKKAAAKKAAALVEDGMVLGVGTGSTVKFFIDELGKKKAAGLTLKAVVTTSSRSQKQLEGYGFTVSPLSEVDQVDLTVDGADRVDKQLNGIKGGGAALTLEKNVAVNSKKNVWIVDESKVVDHLSGFALPVEVLPISCMQVEKRLADEGLKPEFRLTEDGQRLKTHYGNYILDLKLDRIPVPSGLADYLDHTVGVVEHGLFLNICDQVIIARDNGEIEVRSR.

Substrate contacts are provided by residues 31–34, 87–90, and 100–103; these read TGST, DGAD, and KGGG. The active-site Proton acceptor is the glutamate 109. Lysine 127 provides a ligand contact to substrate.

It belongs to the ribose 5-phosphate isomerase family. Homodimer.

It carries out the reaction aldehydo-D-ribose 5-phosphate = D-ribulose 5-phosphate. The protein operates within carbohydrate degradation; pentose phosphate pathway; D-ribose 5-phosphate from D-ribulose 5-phosphate (non-oxidative stage): step 1/1. In terms of biological role, catalyzes the reversible conversion of ribose-5-phosphate to ribulose 5-phosphate. This is Ribose-5-phosphate isomerase A from Lactobacillus delbrueckii subsp. bulgaricus (strain ATCC 11842 / DSM 20081 / BCRC 10696 / JCM 1002 / NBRC 13953 / NCIMB 11778 / NCTC 12712 / WDCM 00102 / Lb 14).